The primary structure comprises 148 residues: Large ribosomal subunit protein bL9 (148 aa).

It belongs to the bacterial ribosomal protein bL9 family.

Functionally, binds to the 23S rRNA. The polypeptide is Large ribosomal subunit protein bL9 (Bacillus thuringiensis subsp. konkukian (strain 97-27)).